The primary structure comprises 481 residues: Ribosomal RNA small subunit methyltransferase F (481 aa).

Residues alanine 125 to lysine 131, glutamate 149, aspartate 176, and aspartate 194 contribute to the S-adenosyl-L-methionine site. Cysteine 247 (nucleophile) is an active-site residue.

It belongs to the class I-like SAM-binding methyltransferase superfamily. RsmB/NOP family.

It is found in the cytoplasm. It catalyses the reaction cytidine(1407) in 16S rRNA + S-adenosyl-L-methionine = 5-methylcytidine(1407) in 16S rRNA + S-adenosyl-L-homocysteine + H(+). Specifically methylates the cytosine at position 1407 (m5C1407) of 16S rRNA. The protein is Ribosomal RNA small subunit methyltransferase F of Psychromonas ingrahamii (strain DSM 17664 / CCUG 51855 / 37).